The sequence spans 421 residues: tRNA (guanine(37)-N(1))-methyltransferase (421 aa).

Residues Arg198, 242–243 (DL), 270–271 (DA), and Asn293 each bind S-adenosyl-L-methionine.

The protein belongs to the class I-like SAM-binding methyltransferase superfamily. TRM5/TYW2 family. Monomer.

The protein resides in the mitochondrion matrix. It localises to the nucleus. The protein localises to the cytoplasm. It catalyses the reaction guanosine(37) in tRNA + S-adenosyl-L-methionine = N(1)-methylguanosine(37) in tRNA + S-adenosyl-L-homocysteine + H(+). In terms of biological role, specifically methylates the N1 position of guanosine-37 in various cytoplasmic and mitochondrial tRNAs. Methylation is not dependent on the nature of the nucleoside 5' of the target nucleoside. This is the first step in the biosynthesis of wybutosine (yW), a modified base adjacent to the anticodon of tRNAs and required for accurate decoding. This Paramecium tetraurelia protein is tRNA (guanine(37)-N(1))-methyltransferase.